Here is a 106-residue protein sequence, read N- to C-terminus: Large ribosomal subunit protein P1 (106 aa).

Residues 69–106 (AAAAAPAEEAKEEAKEEEEEEEEVKEEEAIEGLGALFG) form a disordered region. Acidic residues predominate over residues 83–98 (KEEEEEEEEVKEEEAI).

The protein belongs to the eukaryotic ribosomal protein P1/P2 family. As to quaternary structure, part of the 50S ribosomal subunit. Homodimer, it forms part of the ribosomal stalk which helps the ribosome interact with GTP-bound translation factors. Forms a heptameric uL10/P0(P1)2(P1)2(P1)2 complex, where uL10/P0 forms an elongated spine to which the P1 dimers bind in a sequential fashion.

Functionally, forms part of the ribosomal stalk, playing a central role in the interaction of the ribosome with GTP-bound translation factors. This Archaeoglobus fulgidus (strain ATCC 49558 / DSM 4304 / JCM 9628 / NBRC 100126 / VC-16) protein is Large ribosomal subunit protein P1.